We begin with the raw amino-acid sequence, 256 residues long: Imidazole glycerol phosphate synthase subunit HisF (256 aa).

Residues Asp12 and Asp131 contribute to the active site.

Belongs to the HisA/HisF family. In terms of assembly, heterodimer of HisH and HisF.

The protein resides in the cytoplasm. The catalysed reaction is 5-[(5-phospho-1-deoxy-D-ribulos-1-ylimino)methylamino]-1-(5-phospho-beta-D-ribosyl)imidazole-4-carboxamide + L-glutamine = D-erythro-1-(imidazol-4-yl)glycerol 3-phosphate + 5-amino-1-(5-phospho-beta-D-ribosyl)imidazole-4-carboxamide + L-glutamate + H(+). It functions in the pathway amino-acid biosynthesis; L-histidine biosynthesis; L-histidine from 5-phospho-alpha-D-ribose 1-diphosphate: step 5/9. Its function is as follows. IGPS catalyzes the conversion of PRFAR and glutamine to IGP, AICAR and glutamate. The HisF subunit catalyzes the cyclization activity that produces IGP and AICAR from PRFAR using the ammonia provided by the HisH subunit. The polypeptide is Imidazole glycerol phosphate synthase subunit HisF (Pseudomonas paraeruginosa (strain DSM 24068 / PA7) (Pseudomonas aeruginosa (strain PA7))).